The following is a 734-amino-acid chain: Photosystem I P700 chlorophyll a apoprotein A2 (734 aa).

Helical transmembrane passes span 46–69, 135–158, 175–199, 273–291, 330–353, 369–395, 417–439, and 517–535; these read IFAS…FHVA, LYTG…LHLQ, LNHH…HVAI, MAHH…GHMY, IHFQ…QHMY, AALY…IFFI, AIIS…LYVH, and FLVH…LILV. Residues C559 and C568 each coordinate [4Fe-4S] cluster. The next 2 membrane-spanning stretches (helical) occupy residues 575–596 and 643–665; these read AFYL…YWHW and LSVW…MFLI. Positions 654, 662, and 670 each coordinate chlorophyll a. A phylloquinone-binding site is contributed by W671. Residues 707 to 727 traverse the membrane as a helical segment; the sequence is LVGLAHFSVGYIFTYAAFLIA.

It belongs to the PsaA/PsaB family. As to quaternary structure, the PsaA/B heterodimer binds the P700 chlorophyll special pair and subsequent electron acceptors. PSI consists of a core antenna complex that captures photons, and an electron transfer chain that converts photonic excitation into a charge separation. The eukaryotic PSI reaction center is composed of at least 11 subunits. P700 is a chlorophyll a/chlorophyll a' dimer, A0 is one or more chlorophyll a, A1 is one or both phylloquinones and FX is a shared 4Fe-4S iron-sulfur center. is required as a cofactor.

The protein resides in the plastid. It localises to the chloroplast thylakoid membrane. The catalysed reaction is reduced [plastocyanin] + hnu + oxidized [2Fe-2S]-[ferredoxin] = oxidized [plastocyanin] + reduced [2Fe-2S]-[ferredoxin]. Functionally, psaA and PsaB bind P700, the primary electron donor of photosystem I (PSI), as well as the electron acceptors A0, A1 and FX. PSI is a plastocyanin-ferredoxin oxidoreductase, converting photonic excitation into a charge separation, which transfers an electron from the donor P700 chlorophyll pair to the spectroscopically characterized acceptors A0, A1, FX, FA and FB in turn. Oxidized P700 is reduced on the lumenal side of the thylakoid membrane by plastocyanin. The polypeptide is Photosystem I P700 chlorophyll a apoprotein A2 (Hordeum vulgare (Barley)).